The chain runs to 487 residues: Variant surface glycoprotein WRATAT B (487 aa).

A signal peptide spans 1-19; that stretch reads MWIILALLTLAGSRVAHGA. N71, N84, N418, and N465 each carry an N-linked (GlcNAc...) asparagine glycan. Residues 443 to 468 form a disordered region; sequence KPKAGTEAATTGPGERDAGATANTTG. S470 carries the GPI-anchor amidated serine lipid modification. Positions 471 to 487 are cleaved as a propeptide — removed in mature form; that stretch reads NSFVIKTSPLLFAFLLF.

It localises to the cell membrane. In terms of biological role, VSG forms a coat on the surface of the parasite. The trypanosome evades the immune response of the host by expressing a series of antigenically distinct VSGs from an estimated 1000 VSG genes. This chain is Variant surface glycoprotein WRATAT B, found in Trypanosoma brucei rhodesiense.